The primary structure comprises 65 residues: Sodium channel alpha-toxin Acra4 (65 aa).

Residues 2 to 63 (RDGYIVDDKN…PIKDPSYKCH (62 aa)) form the LCN-type CS-alpha/beta domain. Disulfide bonds link cysteine 12–cysteine 62, cysteine 16–cysteine 34, cysteine 20–cysteine 44, and cysteine 24–cysteine 46. Arginine 65 is a propeptide (removed by a carboxypeptidase).

This sequence belongs to the long (4 C-C) scorpion toxin superfamily. Sodium channel inhibitor family. Alpha subfamily. In terms of tissue distribution, expressed by the venom gland.

Its subcellular location is the secreted. Functionally, alpha toxins bind voltage-independently at site-3 of sodium channels (Nav) and inhibit the inactivation of the activated channels, thereby blocking neuronal transmission. Electrophysiological studies of this were performed using sodium-channels expressed in F11 cell culture, by patch-clamp recordings. Affinity of this toxin toward sodium channels in F11 cell line is in the order of 1 uM concentration. In Androctonus crassicauda (Arabian fat-tailed scorpion), this protein is Sodium channel alpha-toxin Acra4.